The primary structure comprises 1336 residues: Putative botulinum-like toxin Wo (1336 aa).

The tract at residues 1 to 476 is has protease activity; that stretch reads MDVLEMFDVN…VAGMQRMVSL (476 aa). Position 250 (His250) interacts with Zn(2+). Glu251 is an active-site residue. Zn(2+) is bound by residues His254 and Glu296.

It belongs to the peptidase M27 family. Requires Zn(2+) as cofactor.

The catalysed reaction is Limited hydrolysis of proteins of the neuroexocytosis apparatus, synaptobrevins, SNAP25 or syntaxin. No detected action on small molecule substrates.. Inhibited by EDTA and 1,10-phenanthroline. When overexpressed the N-terminus (residues 1-476) cleaves rat synaptobrevin-2/VAMP2 between '89-Trp-|-Trp-90' in vitro. This releases the cytoplasmic domain of VAMP2 from the synaptic vesicle membrane, which would prevent the assembly of the trans-SNARE complex on the membrane and thus prevent vesicle-target membrane fusion and neurotransmitter release. In Weissella oryzae (strain DSM 25784 / JCM 18191 / LMG 30913 / SG25), this protein is Putative botulinum-like toxin Wo.